We begin with the raw amino-acid sequence, 160 residues long: MKLQVLPLSQEAFCAYGDVIETQKRDFFHINNGLVERYHDLALVEILEQDRTLISINRAQPANLPLTIHELERHPLGTQAFIPMKGEVFVVVVALGDDKPDLSTLRAFITNGEQGVNYHRNVWHHPLFAWQRVTDFLTIDRGGSDNCDVESIPEQELCFA.

The protein belongs to the ureidoglycolate lyase family. In terms of assembly, homodimer. It depends on Ni(2+) as a cofactor.

The enzyme catalyses (S)-ureidoglycolate = urea + glyoxylate. Its pathway is nitrogen metabolism; (S)-allantoin degradation. Its function is as follows. Catalyzes the catabolism of the allantoin degradation intermediate (S)-ureidoglycolate, generating urea and glyoxylate. Involved in the anaerobic utilization of allantoin as sole nitrogen source. Reinforces the induction of genes involved in the degradation of allantoin and glyoxylate by producing glyoxylate. The sequence is that of Ureidoglycolate lyase from Escherichia coli O6:H1 (strain CFT073 / ATCC 700928 / UPEC).